The following is a 424-amino-acid chain: Histidine--tRNA ligase (424 aa).

This sequence belongs to the class-II aminoacyl-tRNA synthetase family. In terms of assembly, homodimer.

The protein localises to the cytoplasm. It carries out the reaction tRNA(His) + L-histidine + ATP = L-histidyl-tRNA(His) + AMP + diphosphate + H(+). This chain is Histidine--tRNA ligase, found in Escherichia coli O127:H6 (strain E2348/69 / EPEC).